The chain runs to 443 residues: Tol-Pal system protein TolB (443 aa).

An N-terminal signal peptide occupies residues M1 to A33.

Belongs to the TolB family. In terms of assembly, the Tol-Pal system is composed of five core proteins: the inner membrane proteins TolA, TolQ and TolR, the periplasmic protein TolB and the outer membrane protein Pal. They form a network linking the inner and outer membranes and the peptidoglycan layer.

It is found in the periplasm. Its function is as follows. Part of the Tol-Pal system, which plays a role in outer membrane invagination during cell division and is important for maintaining outer membrane integrity. This chain is Tol-Pal system protein TolB, found in Brucella canis (strain ATCC 23365 / NCTC 10854 / RM-666).